The primary structure comprises 149 residues: uncharacterized protein (149 aa).

The helical transmembrane segment at 124 to 144 (IIIIALIIILANYAPSIIGKI) threads the bilayer.

Belongs to the M.jannaschii MJ0023/MJ0349/MJ1072/MJ1074/MJ1107/MJECL16 family.

It is found in the membrane. This is an uncharacterized protein from Methanocaldococcus jannaschii (strain ATCC 43067 / DSM 2661 / JAL-1 / JCM 10045 / NBRC 100440) (Methanococcus jannaschii).